The sequence spans 413 residues: Argininosuccinate synthase (413 aa).

ATP is bound by residues 12–20 (AYSGGLDTS) and A39. Y92 and S97 together coordinate L-citrulline. G122 lines the ATP pocket. 3 residues coordinate L-aspartate: T124, N128, and D129. N128 is a binding site for L-citrulline. 5 residues coordinate L-citrulline: R132, S189, S198, E274, and Y286.

Belongs to the argininosuccinate synthase family. Type 1 subfamily. Homotetramer.

The protein localises to the cytoplasm. It carries out the reaction L-citrulline + L-aspartate + ATP = 2-(N(omega)-L-arginino)succinate + AMP + diphosphate + H(+). It functions in the pathway amino-acid biosynthesis; L-arginine biosynthesis; L-arginine from L-ornithine and carbamoyl phosphate: step 2/3. The chain is Argininosuccinate synthase from Aliarcobacter butzleri (strain RM4018) (Arcobacter butzleri).